An 89-amino-acid polypeptide reads, in one-letter code: Large ribosomal subunit protein eL31 (89 aa).

It belongs to the eukaryotic ribosomal protein eL31 family.

This chain is Large ribosomal subunit protein eL31 (rpl31e), found in Thermoplasma acidophilum (strain ATCC 25905 / DSM 1728 / JCM 9062 / NBRC 15155 / AMRC-C165).